Here is a 419-residue protein sequence, read N- to C-terminus: WD repeat-containing protein JIP5 (419 aa).

WD repeat units lie at residues 4 to 45 (ALSS…HNQS), 66 to 105 (PSHK…VKAR), 108 to 147 (RAHE…EGDA), 180 to 220 (DQED…KGVE), 224 to 263 (DQED…LDHA), 268 to 308 (GHPS…GIVG), and 351 to 390 (DAAE…QPPP). The interval 172–192 (DPPRSKKKDQEDDLKRKRDEE) is disordered. A disordered region spans residues 372–408 (SADGSDESAGESDVMQPPPATKRRTAKSKAGKKSVHD). Residues 392-404 (TKRRTAKSKAGKK) are compositionally biased toward basic residues.

This sequence belongs to the WD repeat WDR55 family.

The protein resides in the nucleus. It localises to the nucleolus. This Malassezia globosa (strain ATCC MYA-4612 / CBS 7966) (Dandruff-associated fungus) protein is WD repeat-containing protein JIP5 (JIP5).